Here is a 218-residue protein sequence, read N- to C-terminus: Oocyte-specific homeobox protein 7 (218 aa).

Residues 40-72 (SPLVTPGSTMQSSLSVPERNLLQQESEGPSRQS) show a composition bias toward polar residues. Residues 40–77 (SPLVTPGSTMQSSLSVPERNLLQQESEGPSRQSGCMPL) form a disordered region. The segment at residues 94–153 (FRKERIVYSKEQQRLLQKHFDECQYPKEKKIVELAVLIGVTKMEIKKWFKNNRAKYRQMN) is a DNA-binding region (homeobox).

It belongs to the paired homeobox family. Obox subfamily. As to expression, specifically expressed in oocytes and early embryos.

It is found in the nucleus. Transcription factor required for zygotic genome activation (ZGA), a critical event in early embryonic development during which the developmental control passes from maternally provided mRNAs to the expression of the zygotic genome after fertilization. Together with other Obox family members, required in early two-cell stage embryos to kick-start the major ZGA wave by facilitating RNA Polymerase II 'pre-configuration', during which RNA Polymerase II relocates from the initial one-cell stage binding targets to ZGA gene promoters and distal enhancers. Mechanistically, promotes recruitment of RNA Polymerase II from (CG-rich) non-ZGA genes to (CG-poor) ZGA genes at the two-cell stage. Binds to regulatory DNA sequences containing a 5'-ACNCCTTTAATCCCAG-3' sequence motif. Most maternal and zygotic Obox family proteins can compensate for one another. The sequence is that of Oocyte-specific homeobox protein 7 from Mus musculus (Mouse).